A 117-amino-acid polypeptide reads, in one-letter code: MARVKRGVIARARHKKVLKAAKGYYGARSRVYRVAFQAVIKAGQYAYRDRRQRKRQFRQLWIARINAAARQNGLSYSKFINGLKKASVEIDRKILADIAVFDKVAFAALVEKAKSAL.

It belongs to the bacterial ribosomal protein bL20 family.

Binds directly to 23S ribosomal RNA and is necessary for the in vitro assembly process of the 50S ribosomal subunit. It is not involved in the protein synthesizing functions of that subunit. The chain is Large ribosomal subunit protein bL20 from Mannheimia succiniciproducens (strain KCTC 0769BP / MBEL55E).